Reading from the N-terminus, the 136-residue chain is uncharacterized protein (136 aa).

2 helical membrane-spanning segments follow: residues 25–47 (ILKASILFLAIASFHLFSIPHAF) and 78–97 (ITGAFTLTALWAMAVLLLTA).

The protein localises to the cell membrane. This is an uncharacterized protein from Bacillus subtilis (strain 168).